Here is a 595-residue protein sequence, read N- to C-terminus: Phenylalanine--tRNA ligase beta subunit (595 aa).

The interval 86-90 (KLSKP) is 3'-CCA residue in tRNA. The 79-residue stretch at 292 to 370 (FNDRIMDVSI…VGYGFNNLPK (79 aa)) folds into the B5 domain. 4 residues coordinate Mg(2+): aspartate 348, aspartate 354, glutamate 357, and aspartate 358.

This sequence belongs to the phenylalanyl-tRNA synthetase beta subunit family. Type 2 subfamily. In terms of assembly, tetramer of two alpha and two beta subunits. The cofactor is Mg(2+).

It localises to the cytoplasm. The catalysed reaction is tRNA(Phe) + L-phenylalanine + ATP = L-phenylalanyl-tRNA(Phe) + AMP + diphosphate + H(+). In Saccharomyces cerevisiae (strain ATCC 204508 / S288c) (Baker's yeast), this protein is Phenylalanine--tRNA ligase beta subunit (FRS1).